The primary structure comprises 594 residues: Developmental and secondary metabolism regulator veA (594 aa).

One can recognise a Velvet domain in the interval 24–220 (GRRLFYRIDV…AEQGTRVRIR (197 aa)). Residues 38-43 (EKCRAC) carry the Nuclear localization signal motif. 2 disordered regions span residues 40–59 (CRACGSGPKSSTDRRPVDPP) and 210–558 (MAEQ…DVEE). Positions 217–229 (VRIRRDVRMRRRD) are enriched in basic residues. The span at 296–307 (APPPPNPPPPGF) shows a compositional bias: pro residues. A compositionally biased stretch (low complexity) spans 327 to 351 (SHSQYQQPTSSSSSSEQVSSVPQSP). Positions 352 to 362 (AYSSHAAQQHY) are enriched in polar residues. The segment covering 374 to 383 (PERRLSDHRS) has biased composition (basic and acidic residues). The segment covering 384 to 403 (SQPNNHPQQSPHQHSYSHRS) has biased composition (low complexity). Over residues 405-416 (PQRERFMPDSRR) the composition is skewed to basic and acidic residues. Residues 457 to 506 (VADTQATPHLPPIRWPRPNMNLPSPPSEHQEALQPLQPAPLHYESQTHQQ) are PEST. Residues 523 to 538 (YSYGYSYSHNHSHGYG) show a composition bias toward low complexity.

Belongs to the velvet family. VeA subfamily. In terms of assembly, component of the heterotrimeric velvet complex composed of LAEA, VEA and VELB; VEA acting as a bridging protein between LAEA and VELB.

The protein localises to the nucleus. It localises to the cytoplasm. Its function is as follows. Component of the velvet transcription factor complex that controls sexual/asexual developmental ratio in response to light, promoting sexual development in the darkness while stimulating asexual sporulation under illumination. The velvet complex acts as a global regulator for secondary metabolite gene expression. Regulates of the response to reactive oxygen species (ROS) stress. This is Developmental and secondary metabolism regulator veA from Pyricularia oryzae (strain 70-15 / ATCC MYA-4617 / FGSC 8958) (Rice blast fungus).